We begin with the raw amino-acid sequence, 192 residues long: Shikimate kinase (192 aa).

Gly32 to Ala37 serves as a coordination point for ATP. Ser36 serves as a coordination point for Mg(2+). Substrate contacts are provided by Asp54, Arg78, and Gly100. Arg138 is an ATP binding site. A substrate-binding site is contributed by Arg157.

This sequence belongs to the shikimate kinase family. Monomer. It depends on Mg(2+) as a cofactor.

Its subcellular location is the cytoplasm. The catalysed reaction is shikimate + ATP = 3-phosphoshikimate + ADP + H(+). The protein operates within metabolic intermediate biosynthesis; chorismate biosynthesis; chorismate from D-erythrose 4-phosphate and phosphoenolpyruvate: step 5/7. Functionally, catalyzes the specific phosphorylation of the 3-hydroxyl group of shikimic acid using ATP as a cosubstrate. This Rhizobium meliloti (strain 1021) (Ensifer meliloti) protein is Shikimate kinase.